The sequence spans 449 residues: MGGPKIKYSFLFLCITFATIIPSLMAHIGHYDEVWRRRAEEAKEYARNIYEPHPENVTLAFNQKLRDTMKELKKVKGTHNNSTRRGLGTKKYTGPCMVTNPIDKCWRCDPNWADNRKKLADCAMGFGSKAIGGKDGEFYVVTDNSDDYNDPKPGTLRHAVIQKEPLWIIFKRGMNIRLHQEMIMQSDKTIDARGVNVHITKGAGITLQYIKNVIIHGLHIHDIVEGNGGMVRDAVDHIGIRTKSDGDGISIFGASYIWIDHVSMQRCYDGLIDAVEGSTGITISNGHFTDHNEVMLFGASDSSSIDQVMQITLAFNHFGKRLIQRMPRCRWGYIHVVNNDYTHWNMYAIGGSMHPTIIHQGNRFIAPPDIFKKQVTKREYNPESVWMQWTWRSEGNLFMNGAYFTESGDPEWSSKHKDLYDGISAAPAEDVTWMTRFAGVLGCKPGKPC.

The signal sequence occupies residues 1-22 (MGGPKIKYSFLFLCITFATIIP). N-linked (GlcNAc...) asparagine glycosylation is found at N56, N80, and N81. Ca(2+)-binding residues include D245, D269, and D273. The active site involves R325.

Belongs to the polysaccharide lyase 1 family. The cofactor is Ca(2+). As to expression, expressed in anthers and pollen.

The catalysed reaction is Eliminative cleavage of (1-&gt;4)-alpha-D-galacturonan to give oligosaccharides with 4-deoxy-alpha-D-galact-4-enuronosyl groups at their non-reducing ends.. The protein operates within glycan metabolism; pectin degradation; 2-dehydro-3-deoxy-D-gluconate from pectin: step 2/5. Functionally, might be needed during pollen development and tube growth. The protein is Probable pectate lyase P59 (LAT59) of Solanum lycopersicum (Tomato).